We begin with the raw amino-acid sequence, 418 residues long: AP-3 complex subunit mu-2 (418 aa).

The MHD domain maps to 176–417 (NNEAYFDVIE…MTKAGKFQVR (242 aa)).

It belongs to the adaptor complexes medium subunit family. AP-3 associates with the BLOC-1 complex. Adaptor protein complex 3 (AP-3) is a heterotetramer composed of two large adaptins (delta-type subunit AP3D1 and beta-type subunit AP3B1 or AP3B2), a medium adaptin (mu-type subunit AP3M1 or AP3M2) and a small adaptin (sigma-type subunit APS1 or AP3S2).

The protein localises to the golgi apparatus. Its subcellular location is the cytoplasmic vesicle membrane. Functionally, part of the AP-3 complex, an adaptor-related complex which is not clathrin-associated. The complex is associated with the Golgi region as well as more peripheral structures. It facilitates the budding of vesicles from the Golgi membrane and may be directly involved in trafficking to lysosomes. In concert with the BLOC-1 complex, AP-3 is required to target cargos into vesicles assembled at cell bodies for delivery into neurites and nerve terminals. The sequence is that of AP-3 complex subunit mu-2 (AP3M2) from Homo sapiens (Human).